Consider the following 131-residue polypeptide: Small ribosomal subunit protein uS11 (131 aa).

Belongs to the universal ribosomal protein uS11 family. As to quaternary structure, part of the 30S ribosomal subunit. Interacts with proteins S7 and S18. Binds to IF-3. Interacts with VmlR. Interacts with BrxC.

Located on the platform of the 30S subunit, it bridges several disparate RNA helices of the 16S rRNA. Forms part of the Shine-Dalgarno cleft in the 70S ribosome. This chain is Small ribosomal subunit protein uS11, found in Bacillus subtilis (strain 168).